A 372-amino-acid chain; its full sequence is tRNA N6-adenosine threonylcarbamoyltransferase (372 aa).

Residues histidine 133, histidine 137, and tyrosine 154 each coordinate a divalent metal cation. Residues 154–158, aspartate 186, glycine 201, glutamate 205, and asparagine 301 contribute to the substrate site; that span reads YVSGG. Aspartate 330 is an a divalent metal cation binding site.

This sequence belongs to the KAE1 / TsaD family. Component of the EKC/KEOPS complex composed of at least BUD32, CGI121, GON7, KAE1 and PCC1; the whole complex dimerizes. Requires a divalent metal cation as cofactor.

Its subcellular location is the cytoplasm. The protein localises to the nucleus. It carries out the reaction L-threonylcarbamoyladenylate + adenosine(37) in tRNA = N(6)-L-threonylcarbamoyladenosine(37) in tRNA + AMP + H(+). Functionally, component of the EKC/KEOPS complex that is required for the formation of a threonylcarbamoyl group on adenosine at position 37 (t(6)A37) in tRNAs that read codons beginning with adenine. The complex is probably involved in the transfer of the threonylcarbamoyl moiety of threonylcarbamoyl-AMP (TC-AMP) to the N6 group of A37. KAE1 likely plays a direct catalytic role in this reaction, but requires other protein(s) of the complex to fulfill this activity. The EKC/KEOPS complex also promotes both telomere uncapping and telomere elongation. The complex is required for efficient recruitment of transcriptional coactivators. The sequence is that of tRNA N6-adenosine threonylcarbamoyltransferase from Candida albicans (strain SC5314 / ATCC MYA-2876) (Yeast).